The primary structure comprises 473 residues: UTP--glucose-1-phosphate uridylyltransferase (473 aa).

Residues 89–92 (LNGG), lysine 103, glutamine 166, and glycine 195 each bind UTP. Residue 91 to 92 (GG) participates in substrate binding. Residues histidine 196 and 224–226 (NSD) contribute to the substrate site. Residues aspartate 226 and lysine 364 each contribute to the UTP site.

The protein belongs to the UDPGP type 1 family.

Its subcellular location is the cytoplasm. The enzyme catalyses alpha-D-glucose 1-phosphate + UTP + H(+) = UDP-alpha-D-glucose + diphosphate. Its function is as follows. Plays a central role as a glucosyl donor in cellular metabolic pathways. The sequence is that of UTP--glucose-1-phosphate uridylyltransferase from Hordeum vulgare (Barley).